We begin with the raw amino-acid sequence, 387 residues long: DNA-damage-repair/toleration protein 111 (387 aa).

The disordered stretch occupies residues 1–213; the sequence is MLGGLYGDLP…TSGLGVGAGG (213 aa). Low complexity predominate over residues 19-29; it reads SGNSSSVWSSS. Over residues 103–158 the composition is skewed to basic and acidic residues; the sequence is DPARPNDYEEYKREKKRKATEAEMKREMDKRRQEDEERDKREREEREKERERDNSD. Residues 214–260 enclose the G-patch domain; it reads QMTAAQRMMAKMGWKQGQGLGKSEQGITTPLMAKKTDRRAGVIVNAS. Positions 283 to 369 constitute an RRM domain; sequence RVLLLRNMVG…RTVRATFYDE (87 aa).

In terms of assembly, component of the SWAP1-SFPS-RRC1 splicing factor complex which modulates pre-mRNA splicing to promote photomorphogenesis. Interacts with SWAP1 in a light-independent manner. Associates with the photoreceptor phytochrome B (phyB) in nuclear photobodies upon response to red light. Binds to the splicing factor 1 SF1, involved in 3' splicing site recognition. Expressed ubiquitously with highest levels in dry seeds and in cells surrounding the base of trichomes and guard cells.

It localises to the nucleus. The protein resides in the nucleus speckle. As a member of the SWAP1-SFPS-RRC1 splicing factor complex, modulates photomorphogenesis by regulating the gene expression and pre-messenger RNA (mRNA) alternative splicing of a large number of genes, including those involved in plant responses to light signaling, probably by helping in the 3' splice site determination. Associates with and regulates EARLY FLOWERING 3 (ELF3) mRNA processing, a key component of the circadian clock also involved in photomorphogenesis. Required for light-regulated (red, far-red and blue lights) photomorphogenesis in a PHYB- and PHYTOCHROME INTERACTING FACTORS- (PIFs) dependent manner. Promotes flowering under both short (SD) and long days (LD). Controls abscisic acid (ABA) sensitivity during seed development, stomatal responsiveness and germination by monitoring ABI3 splicing, upstream of the splicing factor SUPPRESSOR OF ABI3-ABI5. Seems to be involved in the resistance to UV light and chemical DNA-damaging agents. This chain is DNA-damage-repair/toleration protein 111, found in Arabidopsis thaliana (Mouse-ear cress).